A 333-amino-acid chain; its full sequence is Probable G-protein coupled receptor 33 (333 aa).

Topologically, residues 1–30 (MDLINSTDYLINASTLVRNSTQFLAPASKM) are extracellular. N-linked (GlcNAc...) asparagine glycosylation is found at asparagine 5, asparagine 12, and asparagine 19. A helical transmembrane segment spans residues 31–53 (IIALSLYISSIIGTITNGLYLWV). Topologically, residues 54–64 (LRFKMKQTVNT) are cytoplasmic. Residues 65 to 86 (LLFFHLILSYFISTMILPFMAT) traverse the membrane as a helical segment. Over 87-103 (SQLQDNHWNFGTALCKV) the chain is Extracellular. Cysteines 101 and 179 form a disulfide. The chain crosses the membrane as a helical span at residues 104–124 (FNGTLSLGMFTSVFFLSAIGL). Residues 125 to 143 (DRYLLTLHPVWSQQHRTPR) are Cytoplasmic-facing. Residues 144 to 165 (WASSIVLGVWISAAALSIPYLI) form a helical membrane-spanning segment. The Extracellular segment spans residues 166-209 (FRQTHHDRKGKVTCQNNYAVSTNWESKEMQALRQWIHVACFISR). A helical transmembrane segment spans residues 210–230 (FLLGFLLPFFIIIFCYERVAS). Residues 231-246 (KVKERSLFKSSKPFKV) are Cytoplasmic-facing. A helical membrane pass occupies residues 247 to 268 (MMTAIISFFVCWMPYHIHQGLL). The Extracellular segment spans residues 269-283 (LTTNQSLLLELTLIL). Asparagine 272 carries N-linked (GlcNAc...) asparagine glycosylation. The chain crosses the membrane as a helical span at residues 284-303 (TVLTTSFNTIFSPTLYLFVG). The Cytoplasmic segment spans residues 304-333 (ENFKKVFKKSILALFESTFSEDSSVERTQT).

The protein belongs to the G-protein coupled receptor 1 family.

The protein resides in the cell membrane. Functionally, orphan receptor; could be a chemoattractant receptor. This is Probable G-protein coupled receptor 33 (GPR33) from Pan troglodytes (Chimpanzee).